A 236-amino-acid chain; its full sequence is MAEAEDSPGEQEATSSKPLFAGLSDVSISQDIPIEGEITIPSGTRAQECDSSTLNESIRRTIMRDLKAVGRKFMHVLYPRKSNTLLRDWDLWGPLILCVSLALMLQKSSVEGKRDGGSPEFAEVFVIIWFGAVTITLNSKLLGGNISFFQSLCVLGYCVLPLNIAMLICRLLLLAGQGPINFMIRLFVVLVMFAWSVIASTAFLADCQPPNRKALAVYPVFLFYFVVSWMILTFTP.

The residue at position 2 (Ala-2) is an N-acetylalanine. Over Ala-2 to Thr-84 the chain is Cytoplasmic. Ser-7 bears the Phosphoserine mark. Residues Leu-85–Leu-105 form a helical membrane-spanning segment. Residues Gln-106–Gly-116 are Lumenal-facing. Residues Gly-117–Leu-137 form a helical membrane-spanning segment. At Asn-138 to Ser-147 the chain is on the cytoplasmic side. The chain crosses the membrane as a helical span at residues Phe-148–Ile-168. The Lumenal portion of the chain corresponds to Cys-169–Arg-185. The helical transmembrane segment at Leu-186–Asp-206 threads the bilayer. The Cytoplasmic segment spans residues Cys-207 to Lys-213. The helical transmembrane segment at Ala-214–Phe-234 threads the bilayer. Residues Thr-235–Pro-236 lie on the Lumenal side of the membrane.

The protein belongs to the YIP1 family. In terms of assembly, predominantly interacts with YIPF1 or YIPF2, but may also form a ternary complex with YIPF1 and YIPF2. This interaction may stabilize YIPF1 and YIPF2.

Its subcellular location is the golgi apparatus membrane. May be required for stable YIPF1 and YIPF2 protein expression. This Rattus norvegicus (Rat) protein is Protein YIPF6 (Yipf6).